A 97-amino-acid chain; its full sequence is Class II hydrophobin 3 (97 aa).

The N-terminal stretch at 1–16 is a signal peptide; the sequence is MKFFAAAALFIAGVLA. 4 disulfide bridges follow: Cys-30–Cys-79, Cys-40–Cys-70, Cys-41–Cys-53, and Cys-80–Cys-91.

It belongs to the cerato-ulmin hydrophobin family. Homodimer. Homodimers further self-assemble to form highly ordered films at water-air interfaces through intermolecular interactions.

The protein resides in the secreted. It localises to the cell wall. Functionally, aerial growth, conidiation, and dispersal of filamentous fungi in the environment rely upon a capability of their secreting small amphipathic proteins called hydrophobins (HPBs) with low sequence identity. Class I can self-assemble into an outermost layer of rodlet bundles on aerial cell surfaces, conferring cellular hydrophobicity that supports fungal growth, development and dispersal; whereas Class II form highly ordered films at water-air interfaces through intermolecular interactions but contribute nothing to the rodlet structure. This Trichoderma asperellum (strain ATCC 204424 / CBS 433.97 / NBRC 101777) protein is Class II hydrophobin 3.